The sequence spans 420 residues: Calreticulin (420 aa).

The signal sequence occupies residues Met-1 to Ala-18. Cys-106 and Cys-140 are disulfide-bonded. An alpha-D-glucoside-binding residues include Tyr-110, Lys-112, Tyr-131, and Asp-138. Repeat copies occupy residues Val-194–Met-205, Asp-213–Glu-224, Asp-230–Asp-241, Asp-248–Asp-259, Gly-263–Pro-273, Gly-277–Pro-287, and Gly-291–Pro-301. Residues Val-194 to Asp-259 form a 4 X approximate repeats region. Residues Thr-210 to Glu-220 are compositionally biased toward basic and acidic residues. Residues Thr-210–Asn-272 are disordered. The span at Asp-221–Asp-230 shows a compositional bias: acidic residues. The 3 X approximate repeats stretch occupies residues Gly-263–Pro-301. Glu-321 contacts an alpha-D-glucoside. Residues Glu-357 to Asp-376 show a composition bias toward basic and acidic residues. A disordered region spans residues Glu-357–Leu-420. 2 stretches are compositionally biased toward acidic residues: residues Glu-385 to Glu-398 and Glu-411 to Leu-420. Positions His-417–Leu-420 match the Prevents secretion from ER motif.

This sequence belongs to the calreticulin family.

It localises to the endoplasmic reticulum lumen. In terms of biological role, molecular calcium-binding chaperone promoting folding, oligomeric assembly and quality control in the ER via the calreticulin/calnexin cycle. This lectin may interact transiently with almost all of the monoglucosylated glycoproteins that are synthesized in the ER. This is Calreticulin from Chlamydomonas reinhardtii (Chlamydomonas smithii).